A 79-amino-acid polypeptide reads, in one-letter code: Putative membrane protein insertion efficiency factor (79 aa).

The protein belongs to the UPF0161 family.

Its subcellular location is the cell inner membrane. Its function is as follows. Could be involved in insertion of integral membrane proteins into the membrane. The sequence is that of Putative membrane protein insertion efficiency factor from Bacteroides thetaiotaomicron (strain ATCC 29148 / DSM 2079 / JCM 5827 / CCUG 10774 / NCTC 10582 / VPI-5482 / E50).